The sequence spans 124 residues: Small ribosomal subunit protein uS12 (124 aa).

3-methylthioaspartic acid is present on Asp89.

Belongs to the universal ribosomal protein uS12 family. Part of the 30S ribosomal subunit. Contacts proteins S8 and S17. May interact with IF1 in the 30S initiation complex.

Its function is as follows. With S4 and S5 plays an important role in translational accuracy. Interacts with and stabilizes bases of the 16S rRNA that are involved in tRNA selection in the A site and with the mRNA backbone. Located at the interface of the 30S and 50S subunits, it traverses the body of the 30S subunit contacting proteins on the other side and probably holding the rRNA structure together. The combined cluster of proteins S8, S12 and S17 appears to hold together the shoulder and platform of the 30S subunit. This chain is Small ribosomal subunit protein uS12, found in Baumannia cicadellinicola subsp. Homalodisca coagulata.